Consider the following 646-residue polypeptide: ATP-dependent zinc metalloprotease FtsH (646 aa).

Residues 1 to 27 (MTNNQTDRPRPPGPESRRFDNNDKNNR) are disordered. Over 1–35 (MTNNQTDRPRPPGPESRRFDNNDKNNRNRWGPIPS) the chain is Cytoplasmic. Residues 7 to 26 (DRPRPPGPESRRFDNNDKNN) are compositionally biased toward basic and acidic residues. The chain crosses the membrane as a helical span at residues 36-56 (WAWIVLIVALLLNWLVAPILF). Residues 57-144 (PEGKGAVSIP…QPESSTRSLL (88 aa)) lie on the Extracellular side of the membrane. Residues 145–165 (LSILISFGPTILFFLLFLWLI) form a helical membrane-spanning segment. Over 166–646 (SKAQSSQQGL…GLGEKQPEPA (481 aa)) the chain is Cytoplasmic. Residue 237–244 (GPPGTGKT) coordinates ATP. Histidine 459 lines the Zn(2+) pocket. Glutamate 460 is a catalytic residue. 2 residues coordinate Zn(2+): histidine 463 and aspartate 535.

In the central section; belongs to the AAA ATPase family. It in the C-terminal section; belongs to the peptidase M41 family. In terms of assembly, homohexamer. It depends on Zn(2+) as a cofactor.

It localises to the cell membrane. Its function is as follows. Acts as a processive, ATP-dependent zinc metallopeptidase for both cytoplasmic and membrane proteins. Plays a role in the quality control of integral membrane proteins. This is ATP-dependent zinc metalloprotease FtsH from Thermobaculum terrenum (strain ATCC BAA-798 / CCMEE 7001 / YNP1).